A 173-amino-acid chain; its full sequence is Protein FAM180A (173 aa).

Positions 1–17 (MSWKALTILLVFSSTQA) are cleaved as a signal peptide.

It belongs to the FAM180 family.

Its subcellular location is the secreted. The polypeptide is Protein FAM180A (Fam180a) (Mus musculus (Mouse)).